Consider the following 189-residue polypeptide: Endoribonuclease YbeY (189 aa).

The segment covering 1–10 (MKERSSSPGT) has biased composition (polar residues). Residues 1–23 (MKERSSSPGTPDSGRRARPKPAK) form a disordered region. Zn(2+) contacts are provided by H141, H145, and H151.

This sequence belongs to the endoribonuclease YbeY family. The cofactor is Zn(2+).

It localises to the cytoplasm. Functionally, single strand-specific metallo-endoribonuclease involved in late-stage 70S ribosome quality control and in maturation of the 3' terminus of the 16S rRNA. This chain is Endoribonuclease YbeY, found in Nitrosospira multiformis (strain ATCC 25196 / NCIMB 11849 / C 71).